The sequence spans 471 residues: ATP synthase subunit beta (471 aa).

Gly156 to Thr163 contributes to the ATP binding site.

Belongs to the ATPase alpha/beta chains family. As to quaternary structure, F-type ATPases have 2 components, CF(1) - the catalytic core - and CF(0) - the membrane proton channel. CF(1) has five subunits: alpha(3), beta(3), gamma(1), delta(1), epsilon(1). CF(0) has three main subunits: a(1), b(2) and c(9-12). The alpha and beta chains form an alternating ring which encloses part of the gamma chain. CF(1) is attached to CF(0) by a central stalk formed by the gamma and epsilon chains, while a peripheral stalk is formed by the delta and b chains.

The protein resides in the cell membrane. It catalyses the reaction ATP + H2O + 4 H(+)(in) = ADP + phosphate + 5 H(+)(out). In terms of biological role, produces ATP from ADP in the presence of a proton gradient across the membrane. The catalytic sites are hosted primarily by the beta subunits. In Macrococcus caseolyticus (strain JCSC5402) (Macrococcoides caseolyticum), this protein is ATP synthase subunit beta.